We begin with the raw amino-acid sequence, 636 residues long: 1-deoxy-D-xylulose-5-phosphate synthase 2 (636 aa).

Thiamine diphosphate contacts are provided by residues H78 and A119–S121. Mg(2+) is bound at residue D150. Residues G151 to S152, N179, Y288, and E370 each bind thiamine diphosphate. N179 contributes to the Mg(2+) binding site.

It belongs to the transketolase family. DXPS subfamily. In terms of assembly, homodimer. Requires Mg(2+) as cofactor. The cofactor is thiamine diphosphate.

It catalyses the reaction D-glyceraldehyde 3-phosphate + pyruvate + H(+) = 1-deoxy-D-xylulose 5-phosphate + CO2. Its pathway is metabolic intermediate biosynthesis; 1-deoxy-D-xylulose 5-phosphate biosynthesis; 1-deoxy-D-xylulose 5-phosphate from D-glyceraldehyde 3-phosphate and pyruvate: step 1/1. Its function is as follows. Catalyzes the acyloin condensation reaction between C atoms 2 and 3 of pyruvate and glyceraldehyde 3-phosphate to yield 1-deoxy-D-xylulose-5-phosphate (DXP). This chain is 1-deoxy-D-xylulose-5-phosphate synthase 2, found in Jannaschia sp. (strain CCS1).